Consider the following 685-residue polypeptide: UvrABC system protein B (685 aa).

The Helicase ATP-binding domain maps to 39-420 (EGIGDGLMYQ…TYEAEHQGQV (382 aa)). 52–59 (GVTGSGKT) provides a ligand contact to ATP. A Beta-hairpin motif is present at residues 105-128 (YYDYYQPEAYVPSRDLFIEKDSSI). Positions 443–596 (QVDDLLSEAK…QIAFNQANGI (154 aa)) constitute a Helicase C-terminal domain. Residues 640–675 (AKSIRKLEKEMQEHARNLEFEKAAAARDELFRLRQR) form the UVR domain.

The protein belongs to the UvrB family. As to quaternary structure, forms a heterotetramer with UvrA during the search for lesions. Interacts with UvrC in an incision complex.

The protein resides in the cytoplasm. Its function is as follows. The UvrABC repair system catalyzes the recognition and processing of DNA lesions. A damage recognition complex composed of 2 UvrA and 2 UvrB subunits scans DNA for abnormalities. Upon binding of the UvrA(2)B(2) complex to a putative damaged site, the DNA wraps around one UvrB monomer. DNA wrap is dependent on ATP binding by UvrB and probably causes local melting of the DNA helix, facilitating insertion of UvrB beta-hairpin between the DNA strands. Then UvrB probes one DNA strand for the presence of a lesion. If a lesion is found the UvrA subunits dissociate and the UvrB-DNA preincision complex is formed. This complex is subsequently bound by UvrC and the second UvrB is released. If no lesion is found, the DNA wraps around the other UvrB subunit that will check the other stand for damage. This chain is UvrABC system protein B, found in Aromatoleum aromaticum (strain DSM 19018 / LMG 30748 / EbN1) (Azoarcus sp. (strain EbN1)).